Consider the following 522-residue polypeptide: Biotin-dependent long chain acyl-coenzyme A carboxylase beta4 subunit (522 aa).

A CoA carboxyltransferase N-terminal domain is found at Thr11–Asn261. In terms of domain architecture, CoA carboxyltransferase C-terminal spans Gly270–Leu503.

Belongs to the AccD/PCCB family. The biotin-dependent long-chain acyl-CoA carboxylase (LCC) complex is composed of AccA3, which contains the biotin carboxylase (BC) and biotin carboxyl carrier protein (BCCP) domains, and AccD4, which contains the carboxyl transferase (CT) domain. The complex also contains the beta5 subunit AccD5 and the epsilon subunit AccE5. The four subunits are essential for activity, but AccD5, together with AccE5, probably plays a structural role rather than a catalytic one.

Its function is as follows. Component of a biotin-dependent acyl-CoA carboxylase complex. This subunit transfers the CO2 from carboxybiotin to the CoA ester substrate. When associated with the alpha3 subunit AccA3, the beta5 subunit AccD5 and the epsilon subunit AccE5, forms the LCC complex, which is involved in the carboxylation of long chain acyl-CoA. The LCC complex can use C16-C24 substrates, the highest specific activity is obtained with carboxy-C20-CoA. Has low activity with acetyl-CoA and propionyl-CoA. The polypeptide is Biotin-dependent long chain acyl-coenzyme A carboxylase beta4 subunit (Mycobacterium tuberculosis (strain ATCC 25618 / H37Rv)).